The primary structure comprises 616 residues: Dihydroxy-acid dehydratase (616 aa).

D81 provides a ligand contact to Mg(2+). C122 provides a ligand contact to [2Fe-2S] cluster. Residues D123 and K124 each contribute to the Mg(2+) site. At K124 the chain carries N6-carboxylysine. C195 contributes to the [2Fe-2S] cluster binding site. E491 lines the Mg(2+) pocket. The active-site Proton acceptor is S517.

The protein belongs to the IlvD/Edd family. Homodimer. It depends on [2Fe-2S] cluster as a cofactor. Requires Mg(2+) as cofactor.

It carries out the reaction (2R)-2,3-dihydroxy-3-methylbutanoate = 3-methyl-2-oxobutanoate + H2O. The enzyme catalyses (2R,3R)-2,3-dihydroxy-3-methylpentanoate = (S)-3-methyl-2-oxopentanoate + H2O. It participates in amino-acid biosynthesis; L-isoleucine biosynthesis; L-isoleucine from 2-oxobutanoate: step 3/4. It functions in the pathway amino-acid biosynthesis; L-valine biosynthesis; L-valine from pyruvate: step 3/4. Functions in the biosynthesis of branched-chain amino acids. Catalyzes the dehydration of (2R,3R)-2,3-dihydroxy-3-methylpentanoate (2,3-dihydroxy-3-methylvalerate) into 2-oxo-3-methylpentanoate (2-oxo-3-methylvalerate) and of (2R)-2,3-dihydroxy-3-methylbutanoate (2,3-dihydroxyisovalerate) into 2-oxo-3-methylbutanoate (2-oxoisovalerate), the penultimate precursor to L-isoleucine and L-valine, respectively. The sequence is that of Dihydroxy-acid dehydratase from Sodalis glossinidius (strain morsitans).